The chain runs to 473 residues: Serine palmitoyltransferase 1 (473 aa).

The Lumenal segment spans residues 1–15 (MATATEQWVLVEMVQ). The segment at 1 to 66 (MATATEQWVL…KEELIEEWQP (66 aa)) is interaction with SPTLC2. A helical transmembrane segment spans residues 16-36 (ALYEAPAYHLILEGILILWII). The Cytoplasmic portion of the chain corresponds to 37 to 473 (RLLFSKTYKL…IKEVAQAVLL (437 aa)). Tyr-164 carries the phosphotyrosine; by ABL modification.

It belongs to the class-II pyridoxal-phosphate-dependent aminotransferase family. Component of the serine palmitoyltransferase (SPT) complex, which is also composed of SPTLC2 or SPTLC3 and SPTSSA or SPTSSB. The heterodimer consisting of SPTLC1 and SPTLC2/SPTLC3 forms the catalytic core of the enzyme, while SPTSSA or SPTSSB subunits determine substrate specificity. SPT also interacts with ORMDL proteins, especially ORMDL3, which negatively regulate SPT activity in the presence of ceramides. Forms dimers of heterodimers with SPTLC2. Interacts with RTN4 (isoform B). Pyridoxal 5'-phosphate serves as cofactor. Post-translationally, phosphorylation at Tyr-164 inhibits activity and promotes cell survival. In terms of tissue distribution, widely expressed. Not detected in small intestine.

The protein localises to the endoplasmic reticulum membrane. It carries out the reaction L-serine + hexadecanoyl-CoA + H(+) = 3-oxosphinganine + CO2 + CoA. It catalyses the reaction octadecanoyl-CoA + L-serine + H(+) = 3-oxoeicosasphinganine + CO2 + CoA. The catalysed reaction is tetradecanoyl-CoA + L-serine + H(+) = 3-oxohexadecasphinganine + CO2 + CoA. The enzyme catalyses dodecanoyl-CoA + L-serine + H(+) = 3-oxotetradecasphinganine + CO2 + CoA. The protein operates within lipid metabolism; sphingolipid metabolism. SPT complex catalytic activity is negatively regulated by ORMDL proteins, including ORMDL3, in the presence of ceramides. This mechanism allows to maintain ceramide levels at sufficient concentrations for the production of complex sphingolipids, but which prevents the accumulation of ceramides to levels that trigger apoptosis. Its function is as follows. Component of the serine palmitoyltransferase multisubunit enzyme (SPT) that catalyzes the initial and rate-limiting step in sphingolipid biosynthesis by condensing L-serine and activated acyl-CoA (most commonly palmitoyl-CoA) to form long-chain bases. The SPT complex is also composed of SPTLC2 or SPTLC3 and SPTSSA or SPTSSB. Within this complex, the heterodimer with SPTLC2 or SPTLC3 forms the catalytic core. The composition of the serine palmitoyltransferase (SPT) complex determines the substrate preference. The SPTLC1-SPTLC2-SPTSSA complex shows a strong preference for C16-CoA substrate, while the SPTLC1-SPTLC3-SPTSSA isozyme uses both C14-CoA and C16-CoA as substrates, with a slight preference for C14-CoA. The SPTLC1-SPTLC2-SPTSSB complex shows a strong preference for C18-CoA substrate, while the SPTLC1-SPTLC3-SPTSSB isozyme displays an ability to use a broader range of acyl-CoAs, without apparent preference. Required for adipocyte cell viability and metabolic homeostasis. The polypeptide is Serine palmitoyltransferase 1 (SPTLC1) (Homo sapiens (Human)).